The chain runs to 362 residues: Olfactory receptor 5AU1 (362 aa).

Residues 1 to 79 (MTEFHLQSQM…TDPQLQRLLF (79 aa)) are Extracellular-facing. N-linked (GlcNAc...) asparagine glycosylation is present at Asn-56. The chain crosses the membrane as a helical span at residues 80 to 100 (VVFLGMYTATLLGNLVMFLLI). At 101–116 (HVSATLHTPMYSLLKS) the chain is on the cytoplasmic side. A helical membrane pass occupies residues 117 to 139 (LSFLDFCYSSTVVPQTLVNFLAK). Residues 140-150 (RKVISYFGCMT) lie on the Extracellular side of the membrane. An intrachain disulfide couples Cys-148 to Cys-230. A helical transmembrane segment spans residues 151-171 (QMFFYAGFATSECYLIAAMAY). At 172–194 (DRYAAICNPLLYSTIMSPEVCAS) the chain is on the cytoplasmic side. Residues 195-215 (LIVGSYSAGFLNSLIHTGCIF) form a helical membrane-spanning segment. Topologically, residues 216-247 (SLKFCGAHVVTHFFCDGPPILSLSCVDTSLCE) are extracellular. The helical transmembrane segment at 248–268 (ILLFIFAGFNLLSCTLTILIS) threads the bilayer. Residues 269–290 (YFLILNTILKMSSAQGRFKAFS) lie on the Cytoplasmic side of the membrane. The chain crosses the membrane as a helical span at residues 291 to 311 (TCASHLTAICLFFGTTLFMYL). The Extracellular portion of the chain corresponds to 312–322 (RPRSSYSLTQD). The chain crosses the membrane as a helical span at residues 323 to 343 (RTVAVIYTVVIPVLNPLMYSL). Over 344–362 (RNKDVKKALIKVWGRKTME) the chain is Cytoplasmic.

Belongs to the G-protein coupled receptor 1 family.

The protein localises to the cell membrane. Its function is as follows. Odorant receptor. This chain is Olfactory receptor 5AU1 (OR5AU1), found in Homo sapiens (Human).